The chain runs to 571 residues: Dehydrocurvularin exporter (571 aa).

The disordered stretch occupies residues 1 to 34 (MADGSDLENNHKPELDRSQPGSTSNGSQEQKDPD). The span at 8 to 17 (ENNHKPELDR) shows a compositional bias: basic and acidic residues. Residues 19–28 (QPGSTSNGSQ) show a composition bias toward polar residues. Asn25 carries N-linked (GlcNAc...) asparagine glycosylation. The next 14 membrane-spanning stretches (helical) occupy residues 47–67 (ILVM…IGII), 86–106 (WYGS…GKLF), 120–140 (FIFL…SVII), 143–163 (AIQG…INYV), 171–191 (LLIG…PVIG), 202–222 (WCFW…LLFL), 238–258 (IILA…VCLT), 275–295 (VIAT…TEWF), 317–337 (LFCL…PIYF), 350–370 (VNTL…GGVI), 379–399 (FELL…ILDV), 405–425 (MYIG…QIPM), 443–463 (IMVM…QSLF), and 514–534 (VFAF…IIPF). The segment at 538–571 (PDHGKKDKPATEEAAEEKSEAEGKVSGDKEENHS) is disordered.

The protein belongs to the major facilitator superfamily. TCR/Tet family.

It localises to the cell membrane. Its function is as follows. Efflux pump that is probably involved in the export of dehydrocurvularin. This Aspergillus terreus protein is Dehydrocurvularin exporter.